A 173-amino-acid chain; its full sequence is Co-chaperone protein HscB homolog (173 aa).

One can recognise a J domain in the interval 2–74; the sequence is NYFELFSLSP…ISRAEHMLSL (73 aa).

This sequence belongs to the HscB family. In terms of assembly, interacts with HscA and stimulates its ATPase activity.

Functionally, co-chaperone involved in the maturation of iron-sulfur cluster-containing proteins. Seems to help targeting proteins to be folded toward HscA. The chain is Co-chaperone protein HscB homolog from Shewanella loihica (strain ATCC BAA-1088 / PV-4).